A 285-amino-acid chain; its full sequence is 2-dehydro-3-deoxyphosphooctonate aldolase (285 aa).

The protein belongs to the KdsA family.

The protein resides in the cytoplasm. It catalyses the reaction D-arabinose 5-phosphate + phosphoenolpyruvate + H2O = 3-deoxy-alpha-D-manno-2-octulosonate-8-phosphate + phosphate. It participates in carbohydrate biosynthesis; 3-deoxy-D-manno-octulosonate biosynthesis; 3-deoxy-D-manno-octulosonate from D-ribulose 5-phosphate: step 2/3. Its pathway is bacterial outer membrane biogenesis; lipopolysaccharide biosynthesis. The sequence is that of 2-dehydro-3-deoxyphosphooctonate aldolase from Variovorax paradoxus (strain S110).